A 424-amino-acid polypeptide reads, in one-letter code: Adenylosuccinate synthetase (424 aa).

Residues 12–18 (GDEGKGK) and 40–42 (GHT) each bind GTP. The active-site Proton acceptor is aspartate 13. Residues aspartate 13 and glycine 40 each coordinate Mg(2+). IMP-binding positions include 13 to 16 (DEGK), 38 to 41 (NAGH), threonine 130, arginine 144, asparagine 220, threonine 235, and arginine 299. Histidine 41 functions as the Proton donor in the catalytic mechanism. Substrate is bound at residue 295–301 (VTTGRRR). GTP contacts are provided by residues arginine 301, 327–329 (KLD), and 412–414 (GTG).

The protein belongs to the adenylosuccinate synthetase family. In terms of assembly, homodimer. The cofactor is Mg(2+).

Its subcellular location is the cytoplasm. It carries out the reaction IMP + L-aspartate + GTP = N(6)-(1,2-dicarboxyethyl)-AMP + GDP + phosphate + 2 H(+). It functions in the pathway purine metabolism; AMP biosynthesis via de novo pathway; AMP from IMP: step 1/2. In terms of biological role, plays an important role in the de novo pathway and in the salvage pathway of purine nucleotide biosynthesis. Catalyzes the first committed step in the biosynthesis of AMP from IMP. The sequence is that of Adenylosuccinate synthetase from Aspergillus fumigatus (strain CBS 144.89 / FGSC A1163 / CEA10) (Neosartorya fumigata).